A 288-amino-acid polypeptide reads, in one-letter code: tRNA dimethylallyltransferase (288 aa).

2-9 (GPTAAGKS) lines the ATP pocket. 4-9 (TAAGKS) lines the substrate pocket. The tract at residues 27-30 (DSMQ) is interaction with substrate tRNA.

It belongs to the IPP transferase family. In terms of assembly, monomer. Mg(2+) serves as cofactor.

It carries out the reaction adenosine(37) in tRNA + dimethylallyl diphosphate = N(6)-dimethylallyladenosine(37) in tRNA + diphosphate. In terms of biological role, catalyzes the transfer of a dimethylallyl group onto the adenine at position 37 in tRNAs that read codons beginning with uridine, leading to the formation of N6-(dimethylallyl)adenosine (i(6)A). The chain is tRNA dimethylallyltransferase from Frankia alni (strain DSM 45986 / CECT 9034 / ACN14a).